The following is a 185-amino-acid chain: MIHAVLIFNKKCQPRLVKYYTPVDLPKQKLLLEQVYELISQRNSSIQSSFLITPPSLLSSGSETINEDIQIIYKNYATLYFTFIVDDQESELAILDLIQTFVEALDRCFAEVNELDLIFNWQTLESVLEEIIQGGMVIETNVKKIVETVDELNRTSNQEARFGNGLGNAFQAITMGGFSNWGARQ.

Belongs to the adaptor complexes small subunit family. Adaptor protein complex 3 (AP-3) is a heterotetramer composed of 2 large adaptins (APL5 and APL6), a medium adaptin (APM3) and a small adaptin (APS3).

The protein resides in the golgi apparatus. It localises to the cytoplasmic vesicle membrane. In terms of biological role, part of the AP-3 complex, an adaptor-related complex which is not clathrin-associated. The complex is associated with the Golgi region as well as more peripheral structures. It facilitates the budding of vesicles from the Golgi membrane and may be directly involved in trafficking to the vacuole. The protein is AP-3 complex subunit sigma (APS3) of Eremothecium gossypii (strain ATCC 10895 / CBS 109.51 / FGSC 9923 / NRRL Y-1056) (Yeast).